Reading from the N-terminus, the 301-residue chain is Protein ARMCX6 (301 aa).

The tract at residues Met-1–Glu-6 is mitochondrion outer membrane (MOM)-targeting sequence. At Met-1–Met-7 the chain is on the mitochondrial intermembrane side. The chain crosses the membrane as a helical; Signal-anchor span at residues Gly-8–Tyr-25. Residues Lys-26–Glu-36 form a mitochondrion outer membrane (MOM)-targeting sequence region. Residues Lys-26 to Pro-301 are Cytoplasmic-facing. Residues Ser-70–Phe-105 form a disordered region.

It belongs to the eutherian X-chromosome-specific Armcx family.

The protein localises to the mitochondrion. It localises to the mitochondrion outer membrane. Its function is as follows. May regulate the dynamics and distribution of mitochondria in neural cells. The sequence is that of Protein ARMCX6 (Armcx6) from Rattus norvegicus (Rat).